A 1143-amino-acid chain; its full sequence is DNA polymerase II large subunit (1143 aa).

Belongs to the archaeal DNA polymerase II family. In terms of assembly, heterodimer of a large subunit and a small subunit.

The enzyme catalyses DNA(n) + a 2'-deoxyribonucleoside 5'-triphosphate = DNA(n+1) + diphosphate. It catalyses the reaction Exonucleolytic cleavage in the 3'- to 5'-direction to yield nucleoside 5'-phosphates.. Its function is as follows. Possesses two activities: a DNA synthesis (polymerase) and an exonucleolytic activity that degrades single-stranded DNA in the 3'- to 5'-direction. Has a template-primer preference which is characteristic of a replicative DNA polymerase. This chain is DNA polymerase II large subunit (polC), found in Archaeoglobus fulgidus (strain ATCC 49558 / DSM 4304 / JCM 9628 / NBRC 100126 / VC-16).